The primary structure comprises 215 residues: Probable phosphoglycerate mutase GpmB (215 aa).

Substrate is bound by residues 8–15 (RHGETQWN), 21–22 (QG), Arg58, Arg60, 82–85 (ELDM), 104–105 (RR), and 151–152 (GI). Catalysis depends on His9, which acts as the Tele-phosphohistidine intermediate. Glu82 serves as the catalytic Proton donor/acceptor.

This sequence belongs to the phosphoglycerate mutase family. GpmB subfamily.

It carries out the reaction (2R)-2-phosphoglycerate = (2R)-3-phosphoglycerate. It participates in carbohydrate degradation; glycolysis; pyruvate from D-glyceraldehyde 3-phosphate: step 3/5. In Klebsiella pneumoniae (strain 342), this protein is Probable phosphoglycerate mutase GpmB.